We begin with the raw amino-acid sequence, 1861 residues long: Protein TANC1 (1861 aa).

At Met-1 the chain carries N-acetylmethionine. Disordered regions lie at residues 1–46, 63–99, 206–225, 257–311, and 439–486; these read MLKA…SSLP, SLPSSPLLPRQSHLVQSRVNKKSPGPVRKPKYVESPR, KSPCETISSPSSTLESKDSG, QKGV…MPRP, and QIAS…ISAE. Basic and acidic residues predominate over residues 8–21; it reads KSREGGKGGKKEAG. Ser-63, Ser-66, Ser-67, Ser-207, and Ser-270 each carry phosphoserine. Positions 206 to 219 are enriched in polar residues; that stretch reads KSPCETISSPSSTL. Over residues 440–455 the composition is skewed to polar residues; the sequence is IASNSPGSSPKTSDPT. The span at 461 to 480 shows a compositional bias: low complexity; that stretch reads TPLLSPSSSTSASSTAKTPL. Ser-465 carries the phosphoserine modification. 11 ANK repeats span residues 896–928, 934–963, 967–996, 1000–1029, 1040–1069, 1078–1107, 1111–1140, 1144–1173, 1177–1206, 1210–1239, and 1243–1272; these read EGLSAALASLRNLYTPNVKVSRLLILGGANVNY, NNAPILCVQSHLGHEEVVTLLLEFGACLDG, NGMTALCYAAAAGHMKLVCLLTKKGVRVDH, KGQCALVHSALRGHGDILQYLLTCEWSPGP, ALQQALTAAASMGHSSVVQCLLGMEKEHEV, WGETALTAAAGRGKLEVCELLLGHGAAVSR, RGVPPLFCAARQGHWQIVRLLLERGCDVNL, QGRTPLMVAACEGHLSTVEFLLSKGAALSS, EGLSALSWACLKGHRAVVQYLVEEGAAIDQ, NGRTPLDLAAFYGDAETVLYLVEKGAVIEH, and SGMRPLDRAIGCRNTSVVVALLRKGAKLGN. TPR repeat units follow at residues 1289 to 1322, 1336 to 1369, and 1371 to 1403; these read LQKLMEEGNVMYKKGKMKEAAQRYQYALRKFPRE, VSLYLNLSRCRRKTNDFGMAEEFASKALELKPKS, and EAFYARARAKRNSRQFVAALADLQEAVKLCPTN. Low complexity predominate over residues 1421-1431; that stretch reads QRSQQQKQQGP. Disordered regions lie at residues 1421 to 1485 and 1636 to 1696; these read QRSQ…SVPS and VAVD…KVQG. The residue at position 1439 (Ser-1439) is a Phosphoserine. Composition is skewed to low complexity over residues 1467–1485 and 1659–1689; these read QEESVSPTPRSQPSSSVPS and SLTSSGSSGSPSSSIKMSSSTSSLTSSSSFS. Phosphoserine occurs at positions 1668, 1676, and 1677.

This sequence belongs to the TANC family. Interacts probably directly with DLG1, DLG4, HOMER1. Interacts with DLGAP1, INA, CAMK2A, GRIN2B and GRIA1. Interacts with TNIK. Interacts with MINK1. Phosphorylated; by MINK1 and TNIK upon stimulation by RAP2A.

The protein resides in the postsynaptic density. Its function is as follows. May be a scaffold component in the postsynaptic density. This is Protein TANC1 (TANC1) from Homo sapiens (Human).